Reading from the N-terminus, the 179-residue chain is Pyridoxal 5'-phosphate synthase subunit PdxT (179 aa).

48-50 (GES) lines the L-glutamine pocket. Residue Cys79 is the Nucleophile of the active site. L-glutamine-binding positions include Arg101 and 127-128 (IR). Residues His163 and Glu165 each act as charge relay system in the active site.

Belongs to the glutaminase PdxT/SNO family. As to quaternary structure, in the presence of PdxS, forms a dodecamer of heterodimers. Only shows activity in the heterodimer.

It catalyses the reaction aldehydo-D-ribose 5-phosphate + D-glyceraldehyde 3-phosphate + L-glutamine = pyridoxal 5'-phosphate + L-glutamate + phosphate + 3 H2O + H(+). It carries out the reaction L-glutamine + H2O = L-glutamate + NH4(+). It functions in the pathway cofactor biosynthesis; pyridoxal 5'-phosphate biosynthesis. In terms of biological role, catalyzes the hydrolysis of glutamine to glutamate and ammonia as part of the biosynthesis of pyridoxal 5'-phosphate. The resulting ammonia molecule is channeled to the active site of PdxS. The polypeptide is Pyridoxal 5'-phosphate synthase subunit PdxT (Francisella tularensis subsp. novicida (strain U112)).